Consider the following 319-residue polypeptide: Glucokinase (319 aa).

Residue 8–13 participates in ATP binding; the sequence is GDIGGT.

It belongs to the bacterial glucokinase family.

The protein localises to the cytoplasm. It carries out the reaction D-glucose + ATP = D-glucose 6-phosphate + ADP + H(+). This chain is Glucokinase, found in Chromohalobacter salexigens (strain ATCC BAA-138 / DSM 3043 / CIP 106854 / NCIMB 13768 / 1H11).